Consider the following 547-residue polypeptide: CTP synthase (547 aa).

Positions 1-265 are amidoligase domain; it reads MARYIFITGG…DQAVLDAFQI (265 aa). Position 13 (serine 13) interacts with CTP. Serine 13 serves as a coordination point for UTP. ATP-binding positions include 14–19 and aspartate 71; that span reads SLGKGL. Residues aspartate 71 and glutamate 139 each coordinate Mg(2+). CTP is bound by residues 146-148, 186-191, and lysine 222; these read DIE and KTKPTQ. UTP contacts are provided by residues 186–191 and lysine 222; that span reads KTKPTQ. The Glutamine amidotransferase type-1 domain maps to 291–546; the sequence is RIAVVGKYTQ…IRAAMDNERL (256 aa). Glycine 352 is an L-glutamine binding site. Cysteine 379 functions as the Nucleophile; for glutamine hydrolysis in the catalytic mechanism. L-glutamine is bound by residues 380–383, glutamate 403, and arginine 474; that span reads LGMQ. Catalysis depends on residues histidine 519 and glutamate 521.

It belongs to the CTP synthase family. As to quaternary structure, homotetramer.

It carries out the reaction UTP + L-glutamine + ATP + H2O = CTP + L-glutamate + ADP + phosphate + 2 H(+). It catalyses the reaction L-glutamine + H2O = L-glutamate + NH4(+). The catalysed reaction is UTP + NH4(+) + ATP = CTP + ADP + phosphate + 2 H(+). It functions in the pathway pyrimidine metabolism; CTP biosynthesis via de novo pathway; CTP from UDP: step 2/2. Its activity is regulated as follows. Allosterically activated by GTP, when glutamine is the substrate; GTP has no effect on the reaction when ammonia is the substrate. The allosteric effector GTP functions by stabilizing the protein conformation that binds the tetrahedral intermediate(s) formed during glutamine hydrolysis. Inhibited by the product CTP, via allosteric rather than competitive inhibition. Its function is as follows. Catalyzes the ATP-dependent amination of UTP to CTP with either L-glutamine or ammonia as the source of nitrogen. Regulates intracellular CTP levels through interactions with the four ribonucleotide triphosphates. The protein is CTP synthase of Paracoccus denitrificans (strain Pd 1222).